A 447-amino-acid polypeptide reads, in one-letter code: uncharacterized protein (447 aa).

The protein localises to the mitochondrion. This is an uncharacterized protein from Dictyostelium discoideum (Social amoeba).